The chain runs to 187 residues: Small ribosomal subunit protein uS5 (187 aa).

Residues 1 to 20 (MAERENRRDRRDDRSREETP) form a disordered region. Residues 22-85 (FADRLVAINR…EQAKRQMIRV (64 aa)) form the S5 DRBM domain. The interval 154-174 (DGLKRESSPRQVAQRRGKKVA) is disordered.

Belongs to the universal ribosomal protein uS5 family. In terms of assembly, part of the 30S ribosomal subunit. Contacts proteins S4 and S8.

With S4 and S12 plays an important role in translational accuracy. In terms of biological role, located at the back of the 30S subunit body where it stabilizes the conformation of the head with respect to the body. The protein is Small ribosomal subunit protein uS5 of Cereibacter sphaeroides (strain ATCC 17025 / ATH 2.4.3) (Rhodobacter sphaeroides).